A 256-amino-acid polypeptide reads, in one-letter code: Small ribosomal subunit protein uS2 (256 aa).

It belongs to the universal ribosomal protein uS2 family.

In Streptococcus agalactiae serotype Ia (strain ATCC 27591 / A909 / CDC SS700), this protein is Small ribosomal subunit protein uS2.